Here is a 300-residue protein sequence, read N- to C-terminus: Formate dehydrogenase-O iron-sulfur subunit (300 aa).

Over 1–260 (MAYQSQDIIR…KFWKGIWKPL (260 aa)) the chain is Cytoplasmic. 4Fe-4S ferredoxin-type domains follow at residues 30-60 (VAKL…DTVG), 91-123 (LEWL…QYAN), 124-153 (GIVD…LNPE), and 158-189 (YKCT…FGTK). The [4Fe-4S] cluster site is built by C39, C42, C45, C49, C100, C103, C108, C112, C133, C136, C139, C143, C160, C163, C175, and C179. A helical membrane pass occupies residues 261 to 279 (AAVGFAATFAASIFHYVGV). Residues 280-300 (GPNRADEEENNLHEEKDEERK) are Periplasmic-facing.

As to quaternary structure, formate dehydrogenase is a membrane-bound complex, formed by subunits alpha, beta and gamma. Requires [4Fe-4S] cluster as cofactor.

Its subcellular location is the cell membrane. Functionally, allows to use formate as major electron donor during aerobic respiration. The beta chain is an electron transfer unit containing 4 cysteine clusters involved in the formation of iron-sulfur centers. Electrons are transferred from the gamma chain to the molybdenum cofactor of the alpha subunit. This is Formate dehydrogenase-O iron-sulfur subunit (fdoH) from Escherichia coli (strain K12).